The following is a 188-amino-acid chain: Nicotinamide-nucleotide adenylyltransferase (188 aa).

The segment at 166 to 188 (SDSLERYAATGESLPESLDDLDD) is disordered.

Belongs to the archaeal NMN adenylyltransferase family.

The protein localises to the cytoplasm. It carries out the reaction beta-nicotinamide D-ribonucleotide + ATP + H(+) = diphosphate + NAD(+). Its pathway is cofactor biosynthesis; NAD(+) biosynthesis; NAD(+) from nicotinamide D-ribonucleotide: step 1/1. The protein is Nicotinamide-nucleotide adenylyltransferase of Haloarcula marismortui (strain ATCC 43049 / DSM 3752 / JCM 8966 / VKM B-1809) (Halobacterium marismortui).